We begin with the raw amino-acid sequence, 124 residues long: Small ribosomal subunit protein uS12 (124 aa).

At aspartate 89 the chain carries 3-methylthioaspartic acid.

It belongs to the universal ribosomal protein uS12 family. Part of the 30S ribosomal subunit. Contacts proteins S8 and S17. May interact with IF1 in the 30S initiation complex.

Its function is as follows. With S4 and S5 plays an important role in translational accuracy. In terms of biological role, interacts with and stabilizes bases of the 16S rRNA that are involved in tRNA selection in the A site and with the mRNA backbone. Located at the interface of the 30S and 50S subunits, it traverses the body of the 30S subunit contacting proteins on the other side and probably holding the rRNA structure together. The combined cluster of proteins S8, S12 and S17 appears to hold together the shoulder and platform of the 30S subunit. This chain is Small ribosomal subunit protein uS12, found in Edwardsiella ictaluri (strain 93-146).